Here is a 518-residue protein sequence, read N- to C-terminus: GMP synthase [glutamine-hydrolyzing] (518 aa).

The 194-residue stretch at 8-201 folds into the Glutamine amidotransferase type-1 domain; the sequence is TVLIIDFGSQ…VCKISGIKNN (194 aa). Cys85 acts as the Nucleophile in catalysis. Residues His175 and Glu177 contribute to the active site. The 192-residue stretch at 202–393 folds into the GMPS ATP-PPase domain; it reads WSMAAYRDQA…LGLPEEFIKR (192 aa). 229–235 contributes to the ATP binding site; that stretch reads SGGVDSS.

In terms of assembly, homodimer.

The enzyme catalyses XMP + L-glutamine + ATP + H2O = GMP + L-glutamate + AMP + diphosphate + 2 H(+). The protein operates within purine metabolism; GMP biosynthesis; GMP from XMP (L-Gln route): step 1/1. Catalyzes the synthesis of GMP from XMP. The protein is GMP synthase [glutamine-hydrolyzing] of Bartonella bacilliformis (strain ATCC 35685 / KC583 / Herrer 020/F12,63).